The primary structure comprises 37 residues: Large ribosomal subunit protein bL36 (37 aa).

This sequence belongs to the bacterial ribosomal protein bL36 family.

The protein is Large ribosomal subunit protein bL36 of Syntrophotalea carbinolica (strain DSM 2380 / NBRC 103641 / GraBd1) (Pelobacter carbinolicus).